The sequence spans 417 residues: MEGNFLNNPWINCCFVTTYAGVVAQYFKKGAEWFNFTTPSIGTFTNEQNEEDSSNYSTSGYDSSAETISANSSPINRSGVRSRISQKQRQRILKEAHFKAQQLNRKMVVQKSCPPDHEIKPVPSKFYQFDAITDFGFGGPVLLVGMQKDVEVMKLETKEKARSGRKKNRKSKYKCNMYKMTKLAQIVAKIPKKKEVIEIDEDGFQKVSSKKAAKLRTLKPADVPTPPTKVVENKEEVIKLEVIEQPEPIVLPVSTPTVTFSRFEEMKRVVKVEKAQESAKTKALKKSKAISISRHVGFLQILEKLEETEEKPQVENEKKVVVKHVQSARKNQKKGRKNRKVEPPKEEFEPYEEDHYNFKRYFLIIGVYVLVFIYVCTNVLTVGVSYEFPYITLANKNVRAINSTLPKSVNESSFLIR.

2 disordered regions span residues 44-83 (FTNEQNEEDSSNYSTSGYDSSAETISANSSPINRSGVRSR) and 325-346 (VQSARKNQKKGRKNRKVEPPKE). The segment covering 54–64 (SNYSTSGYDSS) has biased composition (low complexity). Over residues 65–76 (AETISANSSPIN) the composition is skewed to polar residues. A compositionally biased stretch (basic residues) spans 326–339 (QSARKNQKKGRKNR). Residues 362-382 (FLIIGVYVLVFIYVCTNVLTV) traverse the membrane as a helical segment.

It localises to the membrane. This is an uncharacterized protein from Caenorhabditis elegans.